The chain runs to 238 residues: MIYAGILAGGIGSRMGNVPLPKQFLDIDNKPILIHTIEKFILVSEFNEIIIATPAQWISHTQDILKKYNITDQRVKVVAGGTDRNETIMNIIDHIRNVNGINNNDVIVTHDAVRPFLTQRIIKENIEVAAKYGAVDTVIEAIDTIVMSKDKQNIHSIPVRNEMYQGQTPQSFNIKLLQDSYRALSSEQKEILSDACKIIVESGHAVKLVRGELYNIKVTTPYDLKVANAIIQGDIADD.

CTP-binding positions include L7 to G10 and G81 to T87.

It belongs to the IspD/TarI cytidylyltransferase family. TarI subfamily.

It catalyses the reaction D-ribitol 5-phosphate + CTP + H(+) = CDP-L-ribitol + diphosphate. Its pathway is cell wall biogenesis; poly(ribitol phosphate) teichoic acid biosynthesis. Its function is as follows. Catalyzes the transfer of the cytidylyl group of CTP to D-ribitol 5-phosphate. This is Ribitol-5-phosphate cytidylyltransferase 2 from Staphylococcus aureus (strain bovine RF122 / ET3-1).